A 424-amino-acid polypeptide reads, in one-letter code: D-inositol 3-phosphate glycosyltransferase (424 aa).

Position 9 (histidine 9) interacts with 1D-myo-inositol 3-phosphate. UDP-N-acetyl-alpha-D-glucosamine is bound by residues 15–16 (QP) and glycine 23. 1D-myo-inositol 3-phosphate-binding positions include 20–25 (DSGGMN), lysine 78, tyrosine 110, threonine 134, and arginine 154. Residues arginine 231, lysine 236, and arginine 294 each coordinate UDP-N-acetyl-alpha-D-glucosamine. Mg(2+) contacts are provided by tyrosine 303, arginine 304, and alanine 306. UDP-N-acetyl-alpha-D-glucosamine is bound by residues glutamate 316 and glutamate 324. Residue threonine 330 participates in Mg(2+) binding.

The protein belongs to the glycosyltransferase group 1 family. MshA subfamily. Homodimer.

It carries out the reaction 1D-myo-inositol 3-phosphate + UDP-N-acetyl-alpha-D-glucosamine = 1D-myo-inositol 2-acetamido-2-deoxy-alpha-D-glucopyranoside 3-phosphate + UDP + H(+). Its function is as follows. Catalyzes the transfer of a N-acetyl-glucosamine moiety to 1D-myo-inositol 3-phosphate to produce 1D-myo-inositol 2-acetamido-2-deoxy-glucopyranoside 3-phosphate in the mycothiol biosynthesis pathway. This chain is D-inositol 3-phosphate glycosyltransferase, found in Corynebacterium efficiens (strain DSM 44549 / YS-314 / AJ 12310 / JCM 11189 / NBRC 100395).